Here is a 158-residue protein sequence, read N- to C-terminus: UPF0758 protein VC_1786 (158 aa).

The 122-residue stretch at 37–158 folds into the MPN domain; sequence TFARTENTTE…SVSFAERGWL (122 aa). Positions 108, 110, and 121 each coordinate Zn(2+). The JAMM motif signature appears at 108 to 121; it reads HNHPSGDPEPSQAD.

This sequence belongs to the UPF0758 family.

This chain is UPF0758 protein VC_1786, found in Vibrio cholerae serotype O1 (strain ATCC 39315 / El Tor Inaba N16961).